A 193-amino-acid polypeptide reads, in one-letter code: Holliday junction branch migration complex subunit RuvA (193 aa).

The segment at 1-64 is domain I; it reads MITSLTGTIL…EDAHLLYGFM (64 aa). Residues 65–139 form a domain II region; it reads TVAERDMFRL…DKMGGIAPGP (75 aa). Positions 139-143 are flexible linker; the sequence is PMGRG. Positions 144–193 are domain III; the sequence is GAGDPRQEAIAALLTLGYKPAQASQAIAGLADGLGLEDLIRQSLQNLSRH.

This sequence belongs to the RuvA family. As to quaternary structure, homotetramer. Forms an RuvA(8)-RuvB(12)-Holliday junction (HJ) complex. HJ DNA is sandwiched between 2 RuvA tetramers; dsDNA enters through RuvA and exits via RuvB. An RuvB hexamer assembles on each DNA strand where it exits the tetramer. Each RuvB hexamer is contacted by two RuvA subunits (via domain III) on 2 adjacent RuvB subunits; this complex drives branch migration. In the full resolvosome a probable DNA-RuvA(4)-RuvB(12)-RuvC(2) complex forms which resolves the HJ.

It localises to the cytoplasm. In terms of biological role, the RuvA-RuvB-RuvC complex processes Holliday junction (HJ) DNA during genetic recombination and DNA repair, while the RuvA-RuvB complex plays an important role in the rescue of blocked DNA replication forks via replication fork reversal (RFR). RuvA specifically binds to HJ cruciform DNA, conferring on it an open structure. The RuvB hexamer acts as an ATP-dependent pump, pulling dsDNA into and through the RuvAB complex. HJ branch migration allows RuvC to scan DNA until it finds its consensus sequence, where it cleaves and resolves the cruciform DNA. This Acidithiobacillus ferrooxidans (strain ATCC 53993 / BNL-5-31) (Leptospirillum ferrooxidans (ATCC 53993)) protein is Holliday junction branch migration complex subunit RuvA.